The chain runs to 545 residues: CTP synthase (545 aa).

The interval 1-265 (MSKYIFVTGG…DDLVVQNLGL (265 aa)) is amidoligase domain. Serine 13 contacts CTP. Residue serine 13 participates in UTP binding. ATP contacts are provided by residues 14 to 19 (SLGKGA) and aspartate 71. Positions 71 and 139 each coordinate Mg(2+). CTP contacts are provided by residues 146 to 148 (DIE), 186 to 191 (KTKPTQ), and lysine 222. UTP contacts are provided by residues 186–191 (KTKPTQ) and lysine 222. Positions 290–541 (VIALVGKYVG…MRAAIAQRER (252 aa)) constitute a Glutamine amidotransferase type-1 domain. L-glutamine is bound at residue glycine 351. Cysteine 378 functions as the Nucleophile; for glutamine hydrolysis in the catalytic mechanism. L-glutamine-binding positions include 379-382 (LGMQ), glutamate 402, and arginine 469. Catalysis depends on residues histidine 514 and glutamate 516.

This sequence belongs to the CTP synthase family. In terms of assembly, homotetramer.

The catalysed reaction is UTP + L-glutamine + ATP + H2O = CTP + L-glutamate + ADP + phosphate + 2 H(+). It carries out the reaction L-glutamine + H2O = L-glutamate + NH4(+). The enzyme catalyses UTP + NH4(+) + ATP = CTP + ADP + phosphate + 2 H(+). Its pathway is pyrimidine metabolism; CTP biosynthesis via de novo pathway; CTP from UDP: step 2/2. Its activity is regulated as follows. Allosterically activated by GTP, when glutamine is the substrate; GTP has no effect on the reaction when ammonia is the substrate. The allosteric effector GTP functions by stabilizing the protein conformation that binds the tetrahedral intermediate(s) formed during glutamine hydrolysis. Inhibited by the product CTP, via allosteric rather than competitive inhibition. Catalyzes the ATP-dependent amination of UTP to CTP with either L-glutamine or ammonia as the source of nitrogen. Regulates intracellular CTP levels through interactions with the four ribonucleotide triphosphates. This chain is CTP synthase, found in Acidithiobacillus ferrooxidans (strain ATCC 23270 / DSM 14882 / CIP 104768 / NCIMB 8455) (Ferrobacillus ferrooxidans (strain ATCC 23270)).